The sequence spans 581 residues: Protein LYRIC (581 aa).

The Lumenal segment spans residues 1 to 49; sequence MAARSWQDELAQQAEEGSARLRELLSVGLGFLRTELGLDLGLEPKRYPS. Residues 1 to 71 are activation of NF-kappa-B; that stretch reads MAARSWQDEL…LLLFLLGYGW (71 aa). Residues 50–70 traverse the membrane as a helical segment; sequence WVILVGTGALGLLLLFLLGYG. Residues 71-581 lie on the Cytoplasmic side of the membrane; that stretch reads WAAACAGARK…KKKKKARRET (511 aa). The interaction with BCCIP stretch occupies residues 72-168; that stretch reads AAACAGARKK…EKSKKNKKKS (97 aa). Positions 77-221 are disordered; sequence GARKKRRSPP…DSGSLDSTIP (145 aa). The segment at 100–204 is interaction with RELA; that stretch reads EDPAQLKNLR…ISHREKRQQR (105 aa). Residues 108–126 show a composition bias toward basic and acidic residues; it reads LRSEEQKKKNRKKLPEKPK. Threonine 142 carries the phosphothreonine modification. Positions 159–168 are enriched in basic residues; that stretch reads EKSKKNKKKS. Serine 179 carries the post-translational modification Phosphoserine. A compositionally biased stretch (basic residues) spans 197–207; that stretch reads HREKRQQRKRD. A phosphoserine mark is found at serine 215 and serine 250. Position 263 is an N6-acetyllysine (lysine 263). Residues 280 to 581 are disordered; sequence VNGGGWSEKS…KKKKKARRET (302 aa). Phosphoserine is present on residues serine 297, serine 305, and serine 310. Polar residues predominate over residues 318 to 331; it reads QSAWTQDPGDTNAN. Phosphoserine is present on residues serine 343 and serine 368. Composition is skewed to polar residues over residues 353 to 371 and 382 to 393; these read EPVS…SRNQ and NGLSSADPSSDW. Positions 380–442 are lung-homing for mammary tumors; the sequence is GLNGLSSADP…EGALPTGKSK (63 aa). Serine 414 and serine 425 each carry phosphoserine. Positions 421–433 are enriched in basic and acidic residues; sequence DQKDSDDDKEKGE. Over residues 440 to 450 the composition is skewed to basic residues; it reads KSKKKKKKKKK. Phosphoserine occurs at positions 456, 477, 493, and 495. Polar residues-rich tracts occupy residues 519 to 535 and 548 to 567; these read PSVT…SSQV and NAKQ…NWES. Serine 567 carries the phosphoserine modification. Basic residues predominate over residues 570–581; it reads QIKKKKKARRET.

Interacts with BCCIP, CREBBP/CBP and RELA/p65. In terms of tissue distribution, widely expressed, with highest levels in liver, kidney, prostate and small intestine. Not detected in endothelial cells.

It is found in the endoplasmic reticulum membrane. The protein resides in the nucleus membrane. The protein localises to the cell junction. Its subcellular location is the tight junction. It localises to the nucleus. It is found in the nucleolus. The protein resides in the cytoplasm. The protein localises to the perinuclear region. In terms of biological role, down-regulates SLC1A2/EAAT2 promoter activity when expressed ectopically. Activates the nuclear factor kappa-B (NF-kappa-B) transcription factor. Promotes anchorage-independent growth of immortalized melanocytes and astrocytes which is a key component in tumor cell expansion. Promotes lung metastasis and also has an effect on bone and brain metastasis, possibly by enhancing the seeding of tumor cells to the target organ endothelium. Induces chemoresistance. The protein is Protein LYRIC (Mtdh) of Rattus norvegicus (Rat).